Reading from the N-terminus, the 272-residue chain is Small ribosomal subunit protein uS2 (272 aa).

The disordered stretch occupies residues 244-272; it reads EDDYEGAEGDLDLDSANEEESLEDNNEEE.

It belongs to the universal ribosomal protein uS2 family.

This is Small ribosomal subunit protein uS2 from Trichodesmium erythraeum (strain IMS101).